Consider the following 230-residue polypeptide: Demethylmenaquinone methyltransferase (230 aa).

Residues T62, D80, D100–G101, and S117 each bind S-adenosyl-L-methionine.

The protein belongs to the class I-like SAM-binding methyltransferase superfamily. MenG/UbiE family.

It carries out the reaction a 2-demethylmenaquinol + S-adenosyl-L-methionine = a menaquinol + S-adenosyl-L-homocysteine + H(+). The protein operates within quinol/quinone metabolism; menaquinone biosynthesis; menaquinol from 1,4-dihydroxy-2-naphthoate: step 2/2. In terms of biological role, methyltransferase required for the conversion of demethylmenaquinol (DMKH2) to menaquinol (MKH2). This Corynebacterium efficiens (strain DSM 44549 / YS-314 / AJ 12310 / JCM 11189 / NBRC 100395) protein is Demethylmenaquinone methyltransferase.